The chain runs to 156 residues: Transcription elongation factor GreA (156 aa).

Residues 8–75 adopt a coiled-coil conformation; the sequence is LTKEGYEKLK…ELENMLSKAE (68 aa).

It belongs to the GreA/GreB family.

Functionally, necessary for efficient RNA polymerase transcription elongation past template-encoded arresting sites. The arresting sites in DNA have the property of trapping a certain fraction of elongating RNA polymerases that pass through, resulting in locked ternary complexes. Cleavage of the nascent transcript by cleavage factors such as GreA or GreB allows the resumption of elongation from the new 3'terminus. GreA releases sequences of 2 to 3 nucleotides. The polypeptide is Transcription elongation factor GreA (Thermosipho melanesiensis (strain DSM 12029 / CIP 104789 / BI429)).